A 60-amino-acid chain; its full sequence is Small ribosomal subunit protein bS21 (60 aa).

This sequence belongs to the bacterial ribosomal protein bS21 family.

The protein is Small ribosomal subunit protein bS21 (rpsU) of Mycoplasma pneumoniae (strain ATCC 29342 / M129 / Subtype 1) (Mycoplasmoides pneumoniae).